A 307-amino-acid chain; its full sequence is Thymidylate synthase (307 aa).

A dUMP-binding site is contributed by Arg44. Residue Ser108 is modified to Phosphoserine. Residues 169 to 170 (RR), 189 to 190 (CH), 209 to 212 (RSGD), Asn220, and 250 to 252 (HIY) contribute to the dUMP site. Cys189 acts as the Nucleophile in catalysis. Asp212 serves as a coordination point for (6R)-5,10-methylene-5,6,7,8-tetrahydrofolate. Residues Lys286 and Lys302 each participate in a glycyl lysine isopeptide (Lys-Gly) (interchain with G-Cter in SUMO2) cross-link. Ala306 provides a ligand contact to (6R)-5,10-methylene-5,6,7,8-tetrahydrofolate.

It belongs to the thymidylate synthase family. Homodimer.

It localises to the nucleus. The protein localises to the cytoplasm. The protein resides in the mitochondrion. Its subcellular location is the mitochondrion matrix. It is found in the mitochondrion inner membrane. The enzyme catalyses dUMP + (6R)-5,10-methylene-5,6,7,8-tetrahydrofolate = 7,8-dihydrofolate + dTMP. It participates in pyrimidine metabolism; dTTP biosynthesis. Functionally, catalyzes the reductive methylation of 2'-deoxyuridine 5'-monophosphate (dUMP) to thymidine 5'-monophosphate (dTMP), using the cosubstrate, 5,10- methylenetetrahydrofolate (CH2H4folate) as a 1-carbon donor and reductant and contributes to the de novo mitochondrial thymidylate biosynthesis pathway. This Mus musculus (Mouse) protein is Thymidylate synthase (Tyms).